A 313-amino-acid chain; its full sequence is Protoheme IX farnesyltransferase (313 aa).

9 helical membrane passes run 33 to 53 (IALM…PVML), 59 to 79 (MPSW…AGSA), 107 to 127 (VEPA…TLMF), 129 to 149 (LLVN…YVFV), 162 to 182 (IVIG…AVTG), 188 to 208 (AVLL…ALAI), 212 to 232 (DDYA…EVVT), 252 to 272 (VADI…WFVA), and 292 to 312 (LFHM…AAAL).

It belongs to the UbiA prenyltransferase family. Protoheme IX farnesyltransferase subfamily.

The protein resides in the cell membrane. It carries out the reaction heme b + (2E,6E)-farnesyl diphosphate + H2O = Fe(II)-heme o + diphosphate. It functions in the pathway porphyrin-containing compound metabolism; heme O biosynthesis; heme O from protoheme: step 1/1. Converts heme B (protoheme IX) to heme O by substitution of the vinyl group on carbon 2 of heme B porphyrin ring with a hydroxyethyl farnesyl side group. This chain is Protoheme IX farnesyltransferase, found in Parafrankia sp. (strain EAN1pec).